The chain runs to 119 residues: Large ribosomal subunit protein uL22 (119 aa).

This sequence belongs to the universal ribosomal protein uL22 family. In terms of assembly, part of the 50S ribosomal subunit.

This protein binds specifically to 23S rRNA; its binding is stimulated by other ribosomal proteins, e.g. L4, L17, and L20. It is important during the early stages of 50S assembly. It makes multiple contacts with different domains of the 23S rRNA in the assembled 50S subunit and ribosome. Functionally, the globular domain of the protein is located near the polypeptide exit tunnel on the outside of the subunit, while an extended beta-hairpin is found that lines the wall of the exit tunnel in the center of the 70S ribosome. This chain is Large ribosomal subunit protein uL22, found in Trichodesmium erythraeum (strain IMS101).